The sequence spans 143 residues: Insertion element IS2 uncharacterized 16.4 kDa protein (143 aa).

This chain is Insertion element IS2 uncharacterized 16.4 kDa protein, found in Escherichia coli.